The following is a 538-amino-acid chain: Putative cysteine ligase BshC (538 aa).

Positions 460–484 form a coiled coil; that stretch reads KINEQIELLERMLKRNVEKKHEVEL.

Belongs to the BshC family.

In terms of biological role, involved in bacillithiol (BSH) biosynthesis. May catalyze the last step of the pathway, the addition of cysteine to glucosamine malate (GlcN-Mal) to generate BSH. This Bacillus cereus (strain ATCC 10987 / NRS 248) protein is Putative cysteine ligase BshC.